Reading from the N-terminus, the 331-residue chain is Ribosomal RNA small subunit methyltransferase H (331 aa).

Residues 39–41 (GGY), Asp-56, Phe-83, Asp-100, and Gln-107 contribute to the S-adenosyl-L-methionine site.

This sequence belongs to the methyltransferase superfamily. RsmH family.

The protein resides in the cytoplasm. The catalysed reaction is cytidine(1402) in 16S rRNA + S-adenosyl-L-methionine = N(4)-methylcytidine(1402) in 16S rRNA + S-adenosyl-L-homocysteine + H(+). In terms of biological role, specifically methylates the N4 position of cytidine in position 1402 (C1402) of 16S rRNA. The chain is Ribosomal RNA small subunit methyltransferase H from Bartonella bacilliformis (strain ATCC 35685 / KC583 / Herrer 020/F12,63).